We begin with the raw amino-acid sequence, 1255 residues long: Receptor tyrosine-protein kinase erbB-2 (1255 aa).

The first 22 residues, 1-22, serve as a signal peptide directing secretion; that stretch reads MELAALCRWGLLLALLPPGAAS. Residues 23–652 are Extracellular-facing; the sequence is TQVCTGTDMK…PAEQRASPLT (630 aa). Cys26 and Cys53 are disulfide-bonded. N-linked (GlcNAc...) asparagine glycans are attached at residues Asn68 and Asn124. 16 disulfides stabilise this stretch: Cys162/Cys192, Cys195/Cys204, Cys199/Cys212, Cys220/Cys227, Cys224/Cys235, Cys236/Cys244, Cys240/Cys252, Cys255/Cys264, Cys268/Cys295, Cys299/Cys311, Cys315/Cys331, Cys334/Cys338, Cys342/Cys367, Cys475/Cys504, Cys511/Cys520, and Cys515/Cys528. Thr182 is subject to Phosphothreonine. N-linked (GlcNAc...) asparagine glycosylation is present at Asn187. N-linked (GlcNAc...) asparagine glycosylation is present at Asn259. The N-linked (GlcNAc...) asparagine glycan is linked to Asn530. 8 disulfides stabilise this stretch: Cys531/Cys540, Cys544/Cys560, Cys563/Cys576, Cys567/Cys584, Cys587/Cys596, Cys600/Cys623, Cys626/Cys634, and Cys630/Cys642. Asn571 carries N-linked (GlcNAc...) asparagine glycosylation. Asn629 carries N-linked (GlcNAc...) asparagine glycosylation. A helical membrane pass occupies residues 653–675; the sequence is SIISAVVGILLVVVLGVVFGILI. A required for interaction with KPNB1 and EEA1 region spans residues 676-689; it reads KRRQQKIRKYTMRR. A Nuclear localization signal motif is present at residues 676-689; sequence KRRQQKIRKYTMRR. Residues 676–1255 are Cytoplasmic-facing; the sequence is KRRQQKIRKY…PEYLGLDVPV (580 aa). One can recognise a Protein kinase domain in the interval 720–987; sequence LRKVKVLGSG…RMARDPQRFV (268 aa). ATP-binding positions include 726–734 and Lys753; that span reads LGSGAFGTV. The Proton acceptor role is filled by Asp845. Tyr877 carries the post-translational modification Phosphotyrosine. 2 disordered regions span residues 1035–1179 and 1196–1255; these read PAPG…GKNG and YLTP…DVPV. Ser1054, Ser1078, Ser1083, and Ser1107 each carry phosphoserine. 2 positions are modified to phosphotyrosine: Tyr1112 and Tyr1139. Pro residues predominate over residues 1146–1155; that stretch reads RPQPPSPREG. Ser1151 is modified (phosphoserine). Position 1166 is a phosphothreonine (Thr1166). The segment at 1195 to 1197 is interaction with PIK3C2B; the sequence is EYL. Tyr1196 carries the post-translational modification Phosphotyrosine. At Tyr1248 the chain carries Phosphotyrosine; by autocatalysis.

The protein belongs to the protein kinase superfamily. Tyr protein kinase family. EGF receptor subfamily. In terms of assembly, homodimer. Heterodimer with EGFR, ERBB3 and ERBB4. Part of a complex with EGFR and either PIK3C2A or PIK3C2B. May interact with PIK3C2B when phosphorylated on Tyr-1196. Interacts with PLXNB1. Interacts (when phosphorylated on Tyr-1248) with MEMO1. Interacts with MUC1; the interaction is enhanced by heregulin (HRG). Interacts (when phosphorylated on Tyr-1139) with GRB7 (via SH2 domain). Interacts (when phosphorylated on Tyr-1248) with ERBIN. Interacts with KPNB1, RANBP2, EEA1, CRM1 and CLTC. Interacts with PTK6. Interacts with RPA194 and ACTB. Interacts with PRKCABP, SRC and MYOC. Interacts (preferentially with the tyrosine phosphorylated form) with CPNE3; this interaction occurs at the cell membrane and is increased in a growth factor heregulin-dependent manner. Interacts with HSP90AA1 and HSP90AB1 in an ATP-dependent manner; the interaction suppresses ERBB2 kinase activity. Interacts with SORL1; this interaction regulates ERBB2 subcellular distribution by promoting its recycling after internalization from endosomes back to the plasma membrane, hence stimulates ERBB2-mediated signaling. Interacts with SH3BGRL. Interacts with ROR1. In terms of processing, autophosphorylated. Autophosphorylation occurs in trans, i.e. one subunit of the dimeric receptor phosphorylates tyrosine residues on the other subunit. Ligand-binding increases phosphorylation on tyrosine residues. Signaling via SEMA4C promotes phosphorylation at Tyr-1248. Dephosphorylated by PTPN12. Expressed in a variety of tumor tissues including primary breast tumors and tumors from small bowel, esophagus, kidney and mouth.

It localises to the cell membrane. The protein localises to the cell projection. It is found in the ruffle membrane. The protein resides in the early endosome. Its subcellular location is the cytoplasm. It localises to the perinuclear region. The protein localises to the nucleus. The catalysed reaction is L-tyrosyl-[protein] + ATP = O-phospho-L-tyrosyl-[protein] + ADP + H(+). With respect to regulation, activated by dimerization. Not activated by EGF, TGF-alpha and amphiregulin. Interaction with PTK6 increases its intrinsic kinase activity. In terms of biological role, protein tyrosine kinase that is part of several cell surface receptor complexes, but that apparently needs a coreceptor for ligand binding. Essential component of a neuregulin-receptor complex, although neuregulins do not interact with it alone. GP30 is a potential ligand for this receptor. Regulates outgrowth and stabilization of peripheral microtubules (MTs). Upon ERBB2 activation, the MEMO1-RHOA-DIAPH1 signaling pathway elicits the phosphorylation and thus the inhibition of GSK3B at cell membrane. This prevents the phosphorylation of APC and CLASP2, allowing its association with the cell membrane. In turn, membrane-bound APC allows the localization of MACF1 to the cell membrane, which is required for microtubule capture and stabilization. In the nucleus is involved in transcriptional regulation. Associates with the 5'-TCAAATTC-3' sequence in the PTGS2/COX-2 promoter and activates its transcription. Implicated in transcriptional activation of CDKN1A; the function involves STAT3 and SRC. Involved in the transcription of rRNA genes by RNA Pol I and enhances protein synthesis and cell growth. In Homo sapiens (Human), this protein is Receptor tyrosine-protein kinase erbB-2 (ERBB2).